Here is a 718-residue protein sequence, read N- to C-terminus: Polyribonucleotide nucleotidyltransferase (718 aa).

Residues D496 and D502 each coordinate Mg(2+). Residues 563 to 622 (PRLLTIKIDPDMIGLVIGPGGKTIKGITEETGAKIDIEDDGTVTISAVDENKAKRARNIV) enclose the KH domain. Positions 632–700 (GDVYAGRVTR…NKGRINLTRL (69 aa)) constitute an S1 motif domain.

In terms of assembly, may form homodimers or higher order multimers. Interacts with RNase E (rne). Mg(2+) serves as cofactor.

The protein resides in the cytoplasm. The catalysed reaction is RNA(n+1) + phosphate = RNA(n) + a ribonucleoside 5'-diphosphate. Involved in mRNA degradation. Catalyzes the phosphorolysis of single-stranded polyribonucleotides processively in the 3'- to 5'-direction. This chain is Polyribonucleotide nucleotidyltransferase, found in Nostoc sp. (strain PCC 7120 / SAG 25.82 / UTEX 2576).